We begin with the raw amino-acid sequence, 231 residues long: LexA repressor (231 aa).

The H-T-H motif DNA-binding region spans 26–46 (FDEMKLALDLRSKSGIHRLIT). Residues 79–98 (VGFQPRVIDGDRPDRPRPAN) form a disordered region. The span at 86 to 95 (IDGDRPDRPR) shows a compositional bias: basic and acidic residues. Catalysis depends on for autocatalytic cleavage activity residues S152 and K190.

This sequence belongs to the peptidase S24 family. In terms of assembly, homodimer.

The catalysed reaction is Hydrolysis of Ala-|-Gly bond in repressor LexA.. Functionally, represses a number of genes involved in the response to DNA damage (SOS response), including recA and lexA. In the presence of single-stranded DNA, RecA interacts with LexA causing an autocatalytic cleavage which disrupts the DNA-binding part of LexA, leading to derepression of the SOS regulon and eventually DNA repair. The protein is LexA repressor of Ruegeria pomeroyi (strain ATCC 700808 / DSM 15171 / DSS-3) (Silicibacter pomeroyi).